Here is a 2157-residue protein sequence, read N- to C-terminus: Polyketide synthase 2 (2157 aa).

The tract at residues 7-244 (FIFGDQTGGF…IPIPIWAPYH (238 aa)) is N-terminal acylcarrier protein transacylase domain (SAT). A Ketosynthase family 3 (KS3) domain is found at 374–807 (DAKIAIIGMS…GGNSALLLED (434 aa)). Active-site for beta-ketoacyl synthase activity residues include Cys-546, His-681, and His-723. The malonyl-CoA:ACP transacylase (MAT) domain stretch occupies residues 908 to 1213 (GFVFSGQGAQ…ASLHRKDDGW (306 aa)). Residue Ser-998 is the For acyl/malonyl transferase activity of the active site. The product template (PT) domain stretch occupies residues 1290-1605 (TSSVQKIIQQ…RSLLNKVLPP (316 aa)). The tract at residues 1294 to 1428 (QKIIQQTDGP…CLLCFADPNS (135 aa)) is N-terminal hotdog fold. The PKS/mFAS DH domain occupies 1294 to 1600 (QKIIQQTDGP…FLGMSRSLLN (307 aa)). Catalysis depends on His-1327, which acts as the Proton acceptor; for dehydratase activity. The interval 1455-1600 (TDSLLSKGIV…FLGMSRSLLN (146 aa)) is C-terminal hotdog fold. Asp-1514 serves as the catalytic Proton donor; for dehydratase activity. A disordered region spans residues 1629-1653 (AKDTERRPLDIPTRAQRQPNSPPTG). In terms of domain architecture, Carrier 1 spans 1649–1726 (SPPTGTLGRI…ELKEFLGADQ (78 aa)). An O-(pantetheine 4'-phosphoryl)serine modification is found at Ser-1686. Residues 1729-1765 (DDAVACESSNGQHTPQTSDKGSGTLAAQKPDDDTGSD) form a disordered region. Positions 1735 to 1749 (ESSNGQHTPQTSDKG) are enriched in polar residues. The region spanning 1765-1839 (DTTLHRVCAI…SLQKALCGTE (75 aa)) is the Carrier 2 domain. Ser-1799 is modified (O-(pantetheine 4'-phosphoryl)serine). A thioesterase (TE) domain region spans residues 1875-2151 (ASPPHATSIL…MAEMGDLIGE (277 aa)). The active-site For thioesterase activity is Ser-1981.

Functionally, polyketide synthase; part of the Pks2 gene cluster that mediates the formation of infectious structures (appressoria), enabling these fungi to kill insects faster. The product of the Pks2 gene cluster is different from the one of Pks1 and has still not been identified. The protein is Polyketide synthase 2 of Metarhizium guizhouense (strain ARSEF 977).